Reading from the N-terminus, the 101-residue chain is Protein RnfH (101 aa).

Belongs to the UPF0125 (RnfH) family.

The sequence is that of Protein RnfH from Coxiella burnetii (strain RSA 331 / Henzerling II).